The following is a 386-amino-acid chain: 4-hydroxy-3-methylbut-2-en-1-yl diphosphate synthase (flavodoxin) (386 aa).

The [4Fe-4S] cluster site is built by Cys-289, Cys-292, Cys-324, and Glu-331.

Belongs to the IspG family. [4Fe-4S] cluster is required as a cofactor.

The enzyme catalyses (2E)-4-hydroxy-3-methylbut-2-enyl diphosphate + oxidized [flavodoxin] + H2O + 2 H(+) = 2-C-methyl-D-erythritol 2,4-cyclic diphosphate + reduced [flavodoxin]. Its pathway is isoprenoid biosynthesis; isopentenyl diphosphate biosynthesis via DXP pathway; isopentenyl diphosphate from 1-deoxy-D-xylulose 5-phosphate: step 5/6. Its function is as follows. Converts 2C-methyl-D-erythritol 2,4-cyclodiphosphate (ME-2,4cPP) into 1-hydroxy-2-methyl-2-(E)-butenyl 4-diphosphate. This chain is 4-hydroxy-3-methylbut-2-en-1-yl diphosphate synthase (flavodoxin), found in Nitratidesulfovibrio vulgaris (strain ATCC 29579 / DSM 644 / CCUG 34227 / NCIMB 8303 / VKM B-1760 / Hildenborough) (Desulfovibrio vulgaris).